The sequence spans 825 residues: MSGWRKIYYKLLNLPLKLLVKSKVIPADPVSELGLDPSRPILYVLPYNSKADLLTLRAQCLAQDLPDPLIPLEIDGVQLPSHVFIENGPRVFRYYVPKQESVKLFHDYLDLHRNNPALDIQMLPVSVMFGRSPGREGHGTPHLRVLNGVQKFFAVLWLGRDSFVRFSTTVSLRRMASEHGTDKTIAHKLARVARMHFSRQRLAAVGPSLPARQDLFKKLLASKAIEKAVADEARSKKISHEKAQQNAITLMEEIAANFSYEAVRLSDRVLSWTWNRLYQGINVHNAERVRQLAQDGHEIVYVPCHRSHMDYLLLSYVLYHQGLVPPHIAAGINLNFWPAGPIFRRLGAFFIRRTFKGNKLYSTVFREYLGELFTRGYSVEYFVEGGRSRTGRLLEPKTGTLSMTIQAMLRGGTRPITLVPIYIGYEHVMEVGTYAKELRGAIKEKENLLQMLRGLRKLRNLGQGYVNFGEPLPLTTYLNTHVPQWRDAIDPIEAQRPSWLTPAVNDLANQIMVRINNAAAANAMNLCSTALLASRQRSLTREQLLEQLDCYLQLMRNAPYAKDTTVPDKTPEELLNHALNMNKFEVEKDTIGDIIILPREQAVLMTYYRNNIQHLLILPSLIASMVMYHRRITRTELLHKISMIYPMLKAELFLHYSKEQLPETLDTLIDELARQQLICDKGSELVLNPARIRPLQLLAAGVRETLQRYAITLSLLSATPSINRGALEKESRIMAQRLSVLHGINAPEFFDKAVFSTLVATLREEGYISDSGDAIQEHTLEVYNMLSALMTPEVKLTIESVSMPAETSNQPEAPETPEPEGKTES.

Residues 304 to 309 carry the HXXXXD motif motif; that stretch reads CHRSHM. The disordered stretch occupies residues 803-825; sequence MPAETSNQPEAPETPEPEGKTES.

Belongs to the GPAT/DAPAT family.

The protein resides in the cell inner membrane. It catalyses the reaction sn-glycerol 3-phosphate + an acyl-CoA = a 1-acyl-sn-glycero-3-phosphate + CoA. The protein operates within phospholipid metabolism; CDP-diacylglycerol biosynthesis; CDP-diacylglycerol from sn-glycerol 3-phosphate: step 1/3. This Yersinia pseudotuberculosis serotype O:1b (strain IP 31758) protein is Glycerol-3-phosphate acyltransferase.